Reading from the N-terminus, the 272-residue chain is Tropinone reductase-like 1 (272 aa).

17 to 41 lines the NAD(+) pocket; that stretch reads IITGGASGIGACTAELFHENGAKVV. Residue Ser150 coordinates substrate. Tyr163 acts as the Proton acceptor in catalysis.

It belongs to the short-chain dehydrogenases/reductases (SDR) family.

In terms of biological role, has no tropinone reductase activity. In Erythroxylum coca (Coca plant), this protein is Tropinone reductase-like 1.